A 299-amino-acid polypeptide reads, in one-letter code: Glycine--tRNA ligase alpha subunit (299 aa).

It belongs to the class-II aminoacyl-tRNA synthetase family. Tetramer of two alpha and two beta subunits.

It is found in the cytoplasm. The catalysed reaction is tRNA(Gly) + glycine + ATP = glycyl-tRNA(Gly) + AMP + diphosphate. The polypeptide is Glycine--tRNA ligase alpha subunit (Laribacter hongkongensis (strain HLHK9)).